The primary structure comprises 88 residues: Small ribosomal subunit protein uS17 (88 aa).

Belongs to the universal ribosomal protein uS17 family. Part of the 30S ribosomal subunit.

Its function is as follows. One of the primary rRNA binding proteins, it binds specifically to the 5'-end of 16S ribosomal RNA. This chain is Small ribosomal subunit protein uS17, found in Ruthia magnifica subsp. Calyptogena magnifica.